A 21-amino-acid chain; its full sequence is Antimicrobial peptide scolopin-1 (21 aa).

Expressed by the venom gland.

It is found in the secreted. Antimicrobial peptide against both Gram-positive, -negative and yeast. Also induces histamine release by mast cells and shows moderate hemolytic activities against both human and rabbit red cells. The protein is Antimicrobial peptide scolopin-1 of Scolopendra mutilans (Chinese red-headed centipede).